Consider the following 554-residue polypeptide: Undecaprenyl phosphate-alpha-4-amino-4-deoxy-L-arabinose arabinosyl transferase (554 aa).

11 consecutive transmembrane segments (helical) span residues L4–V24, F87–L107, V115–V135, F178–I198, L206–L226, Y262–F282, E293–G313, L315–T335, V351–L371, Q384–L404, and A414–V434.

This sequence belongs to the glycosyltransferase 83 family.

It localises to the cell inner membrane. It catalyses the reaction 4-amino-4-deoxy-alpha-L-arabinopyranosyl di-trans,octa-cis-undecaprenyl phosphate + lipid IVA = lipid IIA + di-trans,octa-cis-undecaprenyl phosphate.. It functions in the pathway lipopolysaccharide metabolism; 4-amino-4-deoxy-beta-L-arabinose-lipid A biosynthesis. Functionally, catalyzes the transfer of the L-Ara4N moiety of the glycolipid undecaprenyl phosphate-alpha-L-Ara4N to lipid A. The modified arabinose is attached to lipid A and is required for resistance to polymyxin and cationic antimicrobial peptides. The chain is Undecaprenyl phosphate-alpha-4-amino-4-deoxy-L-arabinose arabinosyl transferase from Yersinia pseudotuberculosis serotype O:3 (strain YPIII).